A 218-amino-acid chain; its full sequence is Small ribosomal subunit protein uS3c (218 aa).

Residues 47–118 (VQKHMRISSG…RLNITITRIA (72 aa)) form the KH type-2 domain.

Belongs to the universal ribosomal protein uS3 family. Part of the 30S ribosomal subunit.

It is found in the plastid. The protein localises to the chloroplast. This chain is Small ribosomal subunit protein uS3c (rps3), found in Amborella trichopoda.